The chain runs to 396 residues: Elongation factor Tu 1 (396 aa).

Residues 10–206 (KPHINVGTIG…AMDAHIPQPE (197 aa)) form the tr-type G domain. The tract at residues 19-26 (GHVDHGKT) is G1. 19-26 (GHVDHGKT) lines the GTP pocket. Thr26 contributes to the Mg(2+) binding site. Residues 60-64 (GITIA) form a G2 region. Positions 81–84 (DCPG) are G3. Residues 81-85 (DCPGH) and 136-139 (NKAD) contribute to the GTP site. The segment at 136 to 139 (NKAD) is G4. The interval 174–176 (SAL) is G5.

This sequence belongs to the TRAFAC class translation factor GTPase superfamily. Classic translation factor GTPase family. EF-Tu/EF-1A subfamily. Monomer.

It is found in the cytoplasm. The enzyme catalyses GTP + H2O = GDP + phosphate + H(+). Its function is as follows. GTP hydrolase that promotes the GTP-dependent binding of aminoacyl-tRNA to the A-site of ribosomes during protein biosynthesis. The protein is Elongation factor Tu 1 of Halorhodospira halophila (strain DSM 244 / SL1) (Ectothiorhodospira halophila (strain DSM 244 / SL1)).